The chain runs to 181 residues: Large ribosomal subunit protein uL6 (181 aa).

It belongs to the universal ribosomal protein uL6 family. In terms of assembly, part of the 50S ribosomal subunit.

Its function is as follows. This protein binds to the 23S rRNA, and is important in its secondary structure. It is located near the subunit interface in the base of the L7/L12 stalk, and near the tRNA binding site of the peptidyltransferase center. The chain is Large ribosomal subunit protein uL6 from Vesicomyosocius okutanii subsp. Calyptogena okutanii (strain HA).